Consider the following 302-residue polypeptide: Sulfate adenylyltransferase subunit 2 (302 aa).

It belongs to the PAPS reductase family. CysD subfamily. As to quaternary structure, heterodimer composed of CysD, the smaller subunit, and CysN.

The catalysed reaction is sulfate + ATP + H(+) = adenosine 5'-phosphosulfate + diphosphate. The protein operates within sulfur metabolism; hydrogen sulfide biosynthesis; sulfite from sulfate: step 1/3. In terms of biological role, with CysN forms the ATP sulfurylase (ATPS) that catalyzes the adenylation of sulfate producing adenosine 5'-phosphosulfate (APS) and diphosphate, the first enzymatic step in sulfur assimilation pathway. APS synthesis involves the formation of a high-energy phosphoric-sulfuric acid anhydride bond driven by GTP hydrolysis by CysN coupled to ATP hydrolysis by CysD. In Citrobacter koseri (strain ATCC BAA-895 / CDC 4225-83 / SGSC4696), this protein is Sulfate adenylyltransferase subunit 2.